The following is a 318-amino-acid chain: tRNA-dihydrouridine(16) synthase (318 aa).

FMN is bound by residues 7-9 (PME) and Gln-68. The active-site Proton donor is Cys-98. FMN contacts are provided by residues Lys-139, 200–202 (NGE), and 224–225 (CR).

It belongs to the Dus family. DusC subfamily. The cofactor is FMN.

The catalysed reaction is 5,6-dihydrouridine(16) in tRNA + NADP(+) = uridine(16) in tRNA + NADPH + H(+). The enzyme catalyses 5,6-dihydrouridine(16) in tRNA + NAD(+) = uridine(16) in tRNA + NADH + H(+). Catalyzes the synthesis of 5,6-dihydrouridine (D), a modified base found in the D-loop of most tRNAs, via the reduction of the C5-C6 double bond in target uridines. Specifically modifies U16 in tRNAs. The sequence is that of tRNA-dihydrouridine(16) synthase from Vibrio vulnificus (strain CMCP6).